The chain runs to 87 residues: Putative defensin-like protein 238 (87 aa).

A signal peptide spans 1–23; sequence MRSITWFIVFCVFMFIALNHVKG. 4 disulfides stabilise this stretch: Cys-30–Cys-87, Cys-40–Cys-65, Cys-48–Cys-78, and Cys-63–Cys-80.

This sequence belongs to the DEFL family.

The protein localises to the secreted. This Arabidopsis thaliana (Mouse-ear cress) protein is Putative defensin-like protein 238 (SCRL16).